The following is a 202-amino-acid chain: Putative chromophore lyase CpcV (202 aa).

It belongs to the CpcS/CpeS biliprotein lyase family.

In terms of biological role, covalently attaches a chromophore to Cys residue(s) of phycobiliproteins. This chain is Putative chromophore lyase CpcV (cpcV), found in Picosynechococcus sp. (strain ATCC 27264 / PCC 7002 / PR-6) (Agmenellum quadruplicatum).